Here is a 348-residue protein sequence, read N- to C-terminus: MSPYVTMILISSLGLGTTITFTSSSWLMAWMGLEINTLAITPLMVKQHHPRATEATTKYFLTQATASGLLLFATLNNAWMTGEWNTMELSNNLSAPMITMALALKMGVAPMHFWLPEVLQGLPLLTGLILSTWQKLAPFTLLYMTSHELNTTTMTILGLTSTIIGGLGGLNQTQLRKVLAYSSIAHLGWMVIIIQYSKTLALLNLLLYITMTSTAFLTLMTLSATKINTLSTKWATTPIATMTAMLALLALGGLPPLTGFMPKWLILQELTKQNLPALATLMALSALLSLFFYLRMCHTMTLTISPNTNNNMITWRKKPGQKALPLAMLSIMTLMALPTTPTMVAIMN.

10 helical membrane passes run 1-21 (MSPYVTMILISSLGLGTTITF), 25-45 (SWLMAWMGLEINTLAITPLMV), 60-80 (FLTQATASGLLLFATLNNAWM), 93-115 (LSAPMITMALALKMGVAPMHFWL), 149-169 (LNTTTMTILGLTSTIIGGLGG), 177-197 (KVLAYSSIAHLGWMVIIIQYS), 200-220 (LALLNLLLYITMTSTAFLTLM), 239-259 (IATMTAMLALLALGGLPPLTG), 274-294 (NLPALATLMALSALLSLFFYL), and 326-346 (LAMLSIMTLMALPTTPTMVAI).

This sequence belongs to the complex I subunit 2 family.

The protein localises to the mitochondrion inner membrane. The enzyme catalyses a ubiquinone + NADH + 5 H(+)(in) = a ubiquinol + NAD(+) + 4 H(+)(out). Functionally, core subunit of the mitochondrial membrane respiratory chain NADH dehydrogenase (Complex I) that is believed to belong to the minimal assembly required for catalysis. Complex I functions in the transfer of electrons from NADH to the respiratory chain. The immediate electron acceptor for the enzyme is believed to be ubiquinone. This chain is NADH-ubiquinone oxidoreductase chain 2 (MT-ND2), found in Latimeria chalumnae (Coelacanth).